The primary structure comprises 283 residues: Pantothenate synthetase (283 aa).

30-37 lines the ATP pocket; the sequence is MGALHRGH. Catalysis depends on histidine 37, which acts as the Proton donor. Residue glutamine 61 coordinates (R)-pantoate. Glutamine 61 is a beta-alanine binding site. An ATP-binding site is contributed by 147-150; that stretch reads GQKD. Glutamine 153 lines the (R)-pantoate pocket. ATP is bound by residues isoleucine 176 and 184-187; that span reads MSSR.

The protein belongs to the pantothenate synthetase family. In terms of assembly, homodimer.

It localises to the cytoplasm. The catalysed reaction is (R)-pantoate + beta-alanine + ATP = (R)-pantothenate + AMP + diphosphate + H(+). It participates in cofactor biosynthesis; (R)-pantothenate biosynthesis; (R)-pantothenate from (R)-pantoate and beta-alanine: step 1/1. Functionally, catalyzes the condensation of pantoate with beta-alanine in an ATP-dependent reaction via a pantoyl-adenylate intermediate. This Cytophaga hutchinsonii (strain ATCC 33406 / DSM 1761 / CIP 103989 / NBRC 15051 / NCIMB 9469 / D465) protein is Pantothenate synthetase.